The following is a 261-amino-acid chain: Mite allergen Der p 3 (261 aa).

The N-terminal stretch at 1–18 (MIIYNILIVLLLAINTLA) is a signal peptide. Positions 19-29 (NPILPASPNAT) are excised as a propeptide. Residues 30–260 (IVGGEKALAG…FIDWIESKRS (231 aa)) enclose the Peptidase S1 domain. Cys54 and Cys70 form a disulfide bridge. Active-site charge relay system residues include His69 and Asp114. Disulfide bonds link Cys181–Cys198 and Cys210–Cys236. The active-site Charge relay system is the Ser214.

The protein belongs to the peptidase S1 family.

It is found in the secreted. This is Mite allergen Der p 3 (DERP3) from Dermatophagoides pteronyssinus (European house dust mite).